The sequence spans 699 residues: Putative inactive kinesin-like protein KIN-7B (699 aa).

Positions 1–170 constitute a Kinesin motor domain; it reads MRAIQKKSLC…LLFGSCAKEV (170 aa). Positions 179–247 form a coiled coil; sequence VMSDKALVKH…QSRLQDLLQS (69 aa). The segment at 249–345 is disordered; the sequence is GDHDLNRQVQ…VNSRHSRPSG (97 aa). Residues 264-275 show a composition bias toward low complexity; it reads RSPPSVGMPPSV. Residues 276–298 are compositionally biased toward basic and acidic residues; the sequence is SRDDSSQVSHDDSDLYKEVRCIE. Residues 313 to 338 show a composition bias toward polar residues; that stretch reads GESSSPQDSNMNSGLHGNDSNASVNS.

It belongs to the TRAFAC class myosin-kinesin ATPase superfamily. Kinesin family. KIN-7 subfamily.

The polypeptide is Putative inactive kinesin-like protein KIN-7B (Oryza sativa subsp. japonica (Rice)).